The following is a 147-amino-acid chain: Hemoglobin subunit beta-2 (147 aa).

V2 is subject to N-acetylvaline. One can recognise a Globin domain in the interval H3–H147. S13 is modified (phosphoserine). K18 is subject to N6-succinyllysine. Phosphoserine is present on residues S51 and S53. Heme b contacts are provided by H64 and H93. Residue R105 is modified to Asymmetric dimethylarginine. T124 is modified (phosphothreonine). C126 is subject to Phosphoserine; in variant Ser-126.

The protein belongs to the globin family. Heterotetramer of two alpha chains and two beta chains. As to expression, red blood cells.

Functionally, involved in oxygen transport from the lung to the various peripheral tissues. The chain is Hemoglobin subunit beta-2 from Rattus norvegicus (Rat).